We begin with the raw amino-acid sequence, 314 residues long: DNA-directed RNA polymerase subunit alpha (314 aa).

Residues 1–228 (MIEIEKPKIE…EHLNIFVGLT (228 aa)) are alpha N-terminal domain (alpha-NTD). Residues 245 to 314 (KEKVLEMTIE…ELGLGLRKDD (70 aa)) form an alpha C-terminal domain (alpha-CTD) region.

It belongs to the RNA polymerase alpha chain family. As to quaternary structure, homodimer. RNAP is composed of a core of 2 alpha, a beta and a beta' subunit. The core is associated with a delta subunit, and at least one of epsilon or omega. When a sigma factor is associated with the core the holoenzyme is formed, which can initiate transcription.

It catalyses the reaction RNA(n) + a ribonucleoside 5'-triphosphate = RNA(n+1) + diphosphate. DNA-dependent RNA polymerase catalyzes the transcription of DNA into RNA using the four ribonucleoside triphosphates as substrates. In Bacillus subtilis (strain 168), this protein is DNA-directed RNA polymerase subunit alpha.